A 432-amino-acid polypeptide reads, in one-letter code: Serine hydroxymethyltransferase 1 (432 aa).

(6S)-5,6,7,8-tetrahydrofolate is bound by residues Leu131 and 135–137 (GHL). Lys240 carries the N6-(pyridoxal phosphate)lysine modification.

Belongs to the SHMT family. As to quaternary structure, homodimer. The cofactor is pyridoxal 5'-phosphate.

The protein localises to the cytoplasm. The catalysed reaction is (6R)-5,10-methylene-5,6,7,8-tetrahydrofolate + glycine + H2O = (6S)-5,6,7,8-tetrahydrofolate + L-serine. Its pathway is one-carbon metabolism; tetrahydrofolate interconversion. The protein operates within amino-acid biosynthesis; glycine biosynthesis; glycine from L-serine: step 1/1. In terms of biological role, catalyzes the reversible interconversion of serine and glycine with tetrahydrofolate (THF) serving as the one-carbon carrier. This reaction serves as the major source of one-carbon groups required for the biosynthesis of purines, thymidylate, methionine, and other important biomolecules. Also exhibits THF-independent aldolase activity toward beta-hydroxyamino acids, producing glycine and aldehydes, via a retro-aldol mechanism. This chain is Serine hydroxymethyltransferase 1, found in Rhodopseudomonas palustris (strain ATCC BAA-98 / CGA009).